The primary structure comprises 468 residues: Na(+)/H(+) antiporter NhaA (468 aa).

The next 12 membrane-spanning stretches (helical) occupy residues F28–V48, L79–I99, A115–F135, A143–L163, I173–F193, G196–L216, I219–L239, M240–P260, A317–V337, V356–V376, I392–L412, and L426–Y446.

This sequence belongs to the NhaA Na(+)/H(+) (TC 2.A.33) antiporter family.

The protein resides in the cell inner membrane. The enzyme catalyses Na(+)(in) + 2 H(+)(out) = Na(+)(out) + 2 H(+)(in). Functionally, na(+)/H(+) antiporter that extrudes sodium in exchange for external protons. This chain is Na(+)/H(+) antiporter NhaA, found in Bordetella petrii (strain ATCC BAA-461 / DSM 12804 / CCUG 43448).